The primary structure comprises 250 residues: Nuclear transcription factor Y subunit C-4 (250 aa).

Residues 219–250 form a disordered region; it reads GIAYGGQQGHPGYLWQDPQEQQEEPPAEQQSD. Over residues 238–250 the composition is skewed to acidic residues; sequence EQQEEPPAEQQSD.

It belongs to the NFYC/HAP5 subunit family. Heterotrimeric transcription factor composed of three components, NF-YA, NF-YB and NF-YC. NF-YB and NF-YC must interact and dimerize for NF-YA association and DNA binding. Interacts with NFYB2. Interacts with NFYB8, NFYB10 and HD5/NFYB11.

It localises to the nucleus. Its subcellular location is the cytoplasm. Functionally, probable transcription factor involved in the regulation of flowering time under long day (LD) conditions. Functions as a repressor of flowering, independently of HD1 and GHD7. Controls flowering time by negatively regulating the expression of EHD1 and HD3A. Component of the NF-Y/HAP transcription factor complex. In Oryza sativa subsp. japonica (Rice), this protein is Nuclear transcription factor Y subunit C-4.